The primary structure comprises 445 residues: MSIFIGQLIGFAVIAFIIVKWVVPPVRTLMRNQQEAVRAALAESAEAAKKLADADAMHAKALADAKAESEKVTEEAKQDSERIAAQLSEQAGSEAERIKAQGAQQIQLMRQQLIRQLRTGLGAEAVNKAAEIVRAHVADPQAQSATVDRFLSELEQMAPSSVVIDTAATSRLRAASRQSLAALVEKFDSVAGGLDADGLTNLADELASVAKLLLSETALNKHLAEPTDDSAPKVRLLERLLSDKVSATTLDLLRTAVSNRWSTESNLIDAVEHTARLALLKRAEIAGEVDEVEEQLFRFGRVLDAEPRLSALLSDYTTPAEGRVALLDKALTGRPGVNQTAAALLSQTVGLLRGERADEAVIDLAELAVSRRGEVVAHVSAAAELSDAQRTRLTEVLSRIYGRPVSVQLHVDPELLGGLSITVGDEVIDGSIASRLAAAQTGLPD.

Residues 1–168 (MSIFIGQLIG…PSSVVIDTAA (168 aa)) form an ATP synthase subunit b region. A helical transmembrane segment spans residues 3-23 (IFIGQLIGFAVIAFIIVKWVV). An ATP synthase subunit delta region spans residues 169–445 (TSRLRAASRQ…LAAAQTGLPD (277 aa)).

It in the N-terminal section; belongs to the ATPase B chain family. This sequence in the C-terminal section; belongs to the ATPase delta chain family. In terms of assembly, F-type ATPases have 2 components, F(1) - the catalytic core - and F(0) - the membrane proton channel. F(1) has five subunits: alpha(3), beta(3), gamma(1), delta(1), epsilon(1). F(0) has three main subunits: a(1), b(2) and c(10-14). The alpha and beta chains form an alternating ring which encloses part of the gamma chain. F(1) is attached to F(0) by a central stalk formed by the gamma and epsilon chains, while a peripheral stalk is formed by the delta and b chains.

The protein resides in the cell membrane. In terms of biological role, f(1)F(0) ATP synthase produces ATP from ADP in the presence of a proton or sodium gradient. F-type ATPases consist of two structural domains, F(1) containing the extramembraneous catalytic core and F(0) containing the membrane proton channel, linked together by a central stalk and a peripheral stalk. During catalysis, ATP synthesis in the catalytic domain of F(1) is coupled via a rotary mechanism of the central stalk subunits to proton translocation. This fusion protein includes a component of the F(0) channel (subunit b) and of the F(1) subunit (subunit delta). Two copies of subunit b and one of delta together form the peripheral 'stator' stalk which links F(1) to F(0). This Mycolicibacterium smegmatis (strain ATCC 700084 / mc(2)155) (Mycobacterium smegmatis) protein is ATP synthase subunit b-delta (atpFH).